A 101-amino-acid polypeptide reads, in one-letter code: uncharacterized protein (101 aa).

An N-terminal signal peptide occupies residues 1–24 (MILMFRMNKGMSFITLLFSLALFS).

This is an uncharacterized protein from Haemophilus influenzae (strain ATCC 51907 / DSM 11121 / KW20 / Rd).